The primary structure comprises 727 residues: NADH-ubiquinone oxidoreductase 75 kDa subunit, mitochondrial (727 aa).

The N-terminal 23 residues, 1–23, are a transit peptide targeting the mitochondrion; that stretch reads MLRIPVRKALVGLSKSPKGCVRT. A 2Fe-2S ferredoxin-type domain is found at 30 to 108; that stretch reads NLIEVFVDGQ…GWNILTNSEK (79 aa). Residues Cys-64, Cys-75, and Cys-78 each coordinate [2Fe-2S] cluster. An N6-acetyllysine modification is found at Lys-84. Residue Cys-92 participates in [2Fe-2S] cluster binding. A 4Fe-4S His(Cys)3-ligated-type domain is found at 108–147; it reads KSKKAREGVMEFLLANHPLDCPICDQGGECDLQDQSMMFG. 8 residues coordinate [4Fe-4S] cluster: His-124, Cys-128, Cys-131, Cys-137, Cys-176, Cys-179, Cys-182, and Cys-226. The 4Fe-4S Mo/W bis-MGD-type domain occupies 245-301; it reads TRKTESIDVMDAVGSNIVVSTRTGEVMRILPRMHEDINEXWISDKTRFAYDGLKRQR. 3 positions are modified to N6-acetyllysine: Lys-467, Lys-499, and Lys-709.

This sequence belongs to the complex I 75 kDa subunit family. Core subunit of respiratory chain NADH dehydrogenase (Complex I) which is composed of 45 different subunits. This is the largest subunit of complex I and it is a component of the iron-sulfur (IP) fragment of the enzyme. Complex I associates with ubiquinol-cytochrome reductase complex (Complex III) to form supercomplexes. Interacts with MDM2 and AKAP1. [2Fe-2S] cluster is required as a cofactor. Requires [4Fe-4S] cluster as cofactor.

It localises to the mitochondrion inner membrane. The catalysed reaction is a ubiquinone + NADH + 5 H(+)(in) = a ubiquinol + NAD(+) + 4 H(+)(out). Core subunit of the mitochondrial membrane respiratory chain NADH dehydrogenase (Complex I) which catalyzes electron transfer from NADH through the respiratory chain, using ubiquinone as an electron acceptor. Essential for catalysing the entry and efficient transfer of electrons within complex I. Plays a key role in the assembly and stability of complex I and participates in the association of complex I with ubiquinol-cytochrome reductase complex (Complex III) to form supercomplexes. In Gorilla gorilla gorilla (Western lowland gorilla), this protein is NADH-ubiquinone oxidoreductase 75 kDa subunit, mitochondrial (NDUFS1).